Reading from the N-terminus, the 202-residue chain is D-alanyl-D-alanine dipeptidase (202 aa).

Zn(2+) contacts are provided by histidine 116 and aspartate 123. The Proton donor/acceptor role is filled by glutamate 181. Histidine 184 contacts Zn(2+).

The protein belongs to the peptidase M15D family. Zn(2+) is required as a cofactor.

The enzyme catalyses D-alanyl-D-alanine + H2O = 2 D-alanine. Functionally, catalyzes hydrolysis of the D-alanyl-D-alanine dipeptide. May play a role in immunity or defense against glycopeptide antibiotics (perhaps at a moderate level) in the soil environment. Might confer vancomycin resistance to S.coelicolor. This chain is D-alanyl-D-alanine dipeptidase (vanX), found in Streptomyces coelicolor (strain ATCC BAA-471 / A3(2) / M145).